Here is a 619-residue protein sequence, read N- to C-terminus: Long-chain fatty acid transport protein 6 (619 aa).

2 helical membrane-spanning segments follow: residues 22-42 (LLFPYFWDDFWYLLKVVRYGI) and 119-139 (VHVWFGLAKLGCVVAFLNSNL). 221 to 232 (YIFTSGTTGLPK) lines the AMP pocket.

Belongs to the ATP-dependent AMP-binding enzyme family.

The protein localises to the cell membrane. It localises to the sarcolemma. It catalyses the reaction a fatty acid(in) = a fatty acid(out). It carries out the reaction hexadecanoate(out) = hexadecanoate(in). The catalysed reaction is (9Z,12Z)-octadecadienoate(out) = (9Z,12Z)-octadecadienoate(in). The enzyme catalyses (9Z)-octadecenoate(out) = (9Z)-octadecenoate(in). It catalyses the reaction a very long-chain fatty acid + ATP + CoA = a very long-chain fatty acyl-CoA + AMP + diphosphate. It carries out the reaction tetracosanoate + ATP + CoA = tetracosanoyl-CoA + AMP + diphosphate. The catalysed reaction is a long-chain fatty acid + ATP + CoA = a long-chain fatty acyl-CoA + AMP + diphosphate. The enzyme catalyses (9Z)-octadecenoate + ATP + CoA = (9Z)-octadecenoyl-CoA + AMP + diphosphate. It catalyses the reaction (5Z,8Z,11Z,14Z)-eicosatetraenoate + ATP + CoA = (5Z,8Z,11Z,14Z)-eicosatetraenoyl-CoA + AMP + diphosphate. Functionally, mediates the import of long-chain fatty acids (LCFA) into the cell by facilitating their transport at the plasma membrane. Also functions as an acyl-CoA ligase catalyzing the ATP-dependent formation of fatty acyl-CoA using LCFA and very-long-chain fatty acids (VLCFA) as substrates. Plays a pivotal role in regulating available LCFA substrates from exogenous sources in tissues undergoing high levels of beta-oxidation such as the heart. This chain is Long-chain fatty acid transport protein 6 (Slc27a6), found in Mus musculus (Mouse).